The primary structure comprises 947 residues: Bifunctional glutamine synthetase adenylyltransferase/adenylyl-removing enzyme (947 aa).

The interval 1-440 is adenylyl removase; the sequence is MTPLSSPLRQ…VFNELIGDDE (440 aa). Positions 450–947 are adenylyl transferase; the sequence is SEPWREVWQD…ASWRKWLVAV (498 aa).

It belongs to the GlnE family. The cofactor is Mg(2+).

It catalyses the reaction [glutamine synthetase]-O(4)-(5'-adenylyl)-L-tyrosine + phosphate = [glutamine synthetase]-L-tyrosine + ADP. The enzyme catalyses [glutamine synthetase]-L-tyrosine + ATP = [glutamine synthetase]-O(4)-(5'-adenylyl)-L-tyrosine + diphosphate. Its function is as follows. Involved in the regulation of glutamine synthetase GlnA, a key enzyme in the process to assimilate ammonia. When cellular nitrogen levels are high, the C-terminal adenylyl transferase (AT) inactivates GlnA by covalent transfer of an adenylyl group from ATP to specific tyrosine residue of GlnA, thus reducing its activity. Conversely, when nitrogen levels are low, the N-terminal adenylyl removase (AR) activates GlnA by removing the adenylyl group by phosphorolysis, increasing its activity. The regulatory region of GlnE binds the signal transduction protein PII (GlnB) which indicates the nitrogen status of the cell. The chain is Bifunctional glutamine synthetase adenylyltransferase/adenylyl-removing enzyme from Salmonella arizonae (strain ATCC BAA-731 / CDC346-86 / RSK2980).